Reading from the N-terminus, the 239-residue chain is LexA repressor (239 aa).

Positions 26-46 (FDEMKDALDLASKSGIHRLIT) form a DNA-binding region, H-T-H motif. Catalysis depends on for autocatalytic cleavage activity residues Ser159 and Lys197.

This sequence belongs to the peptidase S24 family. As to quaternary structure, homodimer.

The catalysed reaction is Hydrolysis of Ala-|-Gly bond in repressor LexA.. Its function is as follows. Represses a number of genes involved in the response to DNA damage (SOS response), including recA and lexA. In the presence of single-stranded DNA, RecA interacts with LexA causing an autocatalytic cleavage which disrupts the DNA-binding part of LexA, leading to derepression of the SOS regulon and eventually DNA repair. This chain is LexA repressor, found in Rhizobium etli (strain CIAT 652).